We begin with the raw amino-acid sequence, 144 residues long: D-aminoacyl-tRNA deacylase (144 aa).

A Gly-cisPro motif, important for rejection of L-amino acids motif is present at residues 136 to 137; the sequence is GP.

The protein belongs to the DTD family. Homodimer.

The protein resides in the cytoplasm. It carries out the reaction glycyl-tRNA(Ala) + H2O = tRNA(Ala) + glycine + H(+). The catalysed reaction is a D-aminoacyl-tRNA + H2O = a tRNA + a D-alpha-amino acid + H(+). Functionally, an aminoacyl-tRNA editing enzyme that deacylates mischarged D-aminoacyl-tRNAs. Also deacylates mischarged glycyl-tRNA(Ala), protecting cells against glycine mischarging by AlaRS. Acts via tRNA-based rather than protein-based catalysis; rejects L-amino acids rather than detecting D-amino acids in the active site. By recycling D-aminoacyl-tRNA to D-amino acids and free tRNA molecules, this enzyme counteracts the toxicity associated with the formation of D-aminoacyl-tRNA entities in vivo and helps enforce protein L-homochirality. The chain is D-aminoacyl-tRNA deacylase from Histophilus somni (strain 129Pt) (Haemophilus somnus).